The sequence spans 336 residues: MFYPVIKKALFQLDPERAHELTFQQLRRITNTPFEFLVRQSVPTKPVTCMGLSFKNPLGLAAGLDKDGECIDALGAMGFGFIEVGTVTPRPQSGNDKPRLFRVVEAEGLINRMGFNNKGVDSLVENVKKTRFGGVLGINIGKNKDTPVEQGKDDYLICMDKVYAHAGYIAINISSPNTPGLRSLQYGEALDDLLLAIKNKQAELKERHQKYVPVAVKIAPDLSEEELIQIADSLVRHNIDGVIATNTTLDRKLIQGLNHCGQTGGLSGRPLQTSSTEIIRRLSQELAGRLPIIGVGGIDSLVAAREKMAAGASLVQIYSGFIFHGPRLIKDIVTHI.

FMN-binding positions include 62-66 (AGLDK) and T86. Residue K66 participates in substrate binding. Substrate is bound at residue 111 to 115 (NRMGF). FMN-binding residues include N139 and N172. N172 is a binding site for substrate. The active-site Nucleophile is the S175. Position 177 (N177) interacts with substrate. K217 and T245 together coordinate FMN. Residue 246–247 (NT) participates in substrate binding. FMN contacts are provided by residues G268, G297, and 318 to 319 (YS).

Belongs to the dihydroorotate dehydrogenase family. Type 2 subfamily. In terms of assembly, monomer. FMN serves as cofactor.

It localises to the cell membrane. The catalysed reaction is (S)-dihydroorotate + a quinone = orotate + a quinol. Its pathway is pyrimidine metabolism; UMP biosynthesis via de novo pathway; orotate from (S)-dihydroorotate (quinone route): step 1/1. Its function is as follows. Catalyzes the conversion of dihydroorotate to orotate with quinone as electron acceptor. The chain is Dihydroorotate dehydrogenase (quinone) from Pectobacterium carotovorum subsp. carotovorum (strain PC1).